Here is a 98-residue protein sequence, read N- to C-terminus: Plastocyanin (98 aa).

One can recognise a Plastocyanin-like domain in the interval 1–98 (AQIVKLGGDD…AGMKMTITVQ (98 aa)). 4 residues coordinate Cu cation: His-38, Cys-83, His-86, and Met-91.

Belongs to the plastocyanin family. Cu(2+) serves as cofactor.

The protein localises to the plastid. It is found in the chloroplast thylakoid membrane. Functionally, participates in electron transfer between P700 and the cytochrome b6-f complex in photosystem I. This is Plastocyanin (PETE) from Ulva arasakii (Sea lettuce).